We begin with the raw amino-acid sequence, 382 residues long: Diphosphomevalonate decarboxylase ERG19 (382 aa).

(R)-5-diphosphomevalonate is bound by residues 22-25 (YWGK), arginine 78, 157-162 (SGSACR), and threonine 213.

It belongs to the diphosphomevalonate decarboxylase family. Homodimer.

It catalyses the reaction (R)-5-diphosphomevalonate + ATP = isopentenyl diphosphate + ADP + phosphate + CO2. The protein operates within isoprenoid biosynthesis; isopentenyl diphosphate biosynthesis via mevalonate pathway; isopentenyl diphosphate from (R)-mevalonate: step 3/3. Diphosphomevalonate decarboxylase; part of the second module of ergosterol biosynthesis pathway that includes the middle steps of the pathway. MVD1 converts diphosphomevalonate into isopentenyl diphosphate. The second module is carried out in the vacuole and involves the formation of farnesyl diphosphate, which is also an important intermediate in the biosynthesis of ubiquinone, dolichol, heme and prenylated proteins. Activity by the mevalonate kinase ERG12 (FG05912) first converts mevalonate into 5-phosphomevalonate. 5-phosphomevalonate is then further converted to 5-diphosphomevalonate by the phosphomevalonate kinase ERG8 (FG09764). The diphosphomevalonate decarboxylase ERG19 (FG10424) then produces isopentenyl diphosphate. The isopentenyl-diphosphate delta-isomerase IDI1 (FG09722) then catalyzes the 1,3-allylic rearrangement of the homoallylic substrate isopentenyl (IPP) to its highly electrophilic allylic isomer, dimethylallyl diphosphate (DMAPP). Finally the farnesyl diphosphate synthase ERG20 (FG06784) catalyzes the sequential condensation of isopentenyl pyrophosphate with dimethylallyl pyrophosphate, and then with the resultant geranylpyrophosphate to the ultimate product farnesyl pyrophosphate. This is Diphosphomevalonate decarboxylase ERG19 from Gibberella zeae (strain ATCC MYA-4620 / CBS 123657 / FGSC 9075 / NRRL 31084 / PH-1) (Wheat head blight fungus).